Here is a 283-residue protein sequence, read N- to C-terminus: MSKTYQATGIILKGMPLGEADRLVTILTSEYGLIQAVVPGARKHKSRLRGRSELFVVNQLLIVKGRSLDKLIQAETLESYPGLSRDLGKLTASQYLAELVLSLALCEQPQIELYELLNEHLRRIEQKATPQTLYPHLAQAVFHLLAIAGVAPQVYQCCLSREPIETNFIDSLWRVGFSFESGGAINLSSDRRQPFQPSDDLKKEIFLNKLNWKLTAVELTLLQQLGQKFLPQAYDIFPMDVAISSIDVAWIKIERILREYAQYHFGRSFRSATLVDTLAPVDF.

The protein belongs to the RecO family.

In terms of biological role, involved in DNA repair and RecF pathway recombination. The protein is DNA repair protein RecO of Gloeothece citriformis (strain PCC 7424) (Cyanothece sp. (strain PCC 7424)).